We begin with the raw amino-acid sequence, 1070 residues long: DNA-directed RNA polymerase subunit beta (1070 aa).

It belongs to the RNA polymerase beta chain family. In terms of assembly, in plastids the minimal PEP RNA polymerase catalytic core is composed of four subunits: alpha, beta, beta', and beta''. When a (nuclear-encoded) sigma factor is associated with the core the holoenzyme is formed, which can initiate transcription.

The protein localises to the plastid. Its subcellular location is the chloroplast. It carries out the reaction RNA(n) + a ribonucleoside 5'-triphosphate = RNA(n+1) + diphosphate. Functionally, DNA-dependent RNA polymerase catalyzes the transcription of DNA into RNA using the four ribonucleoside triphosphates as substrates. The protein is DNA-directed RNA polymerase subunit beta of Illicium oligandrum (Star anise).